The following is a 335-amino-acid chain: Nod factor export ATP-binding protein I (335 aa).

Basic and acidic residues predominate over residues 1 to 10 (MTQEVPRRLE). The interval 1–22 (MTQEVPRRLEPSPFEWKGDAGP) is disordered. The 231-residue stretch at 37–267 (IDLASVTKSY…KIGCQVIEIY (231 aa)) folds into the ABC transporter domain. 69 to 76 (GPNGAGKS) serves as a coordination point for ATP.

It belongs to the ABC transporter superfamily. Lipooligosaccharide exporter (TC 3.A.1.102) family. In terms of assembly, the complex is composed of two ATP-binding proteins (NodI) and two transmembrane proteins (NodJ).

It localises to the cell inner membrane. Functionally, part of the ABC transporter complex NodIJ involved in the export of the nodulation factors (Nod factors), the bacterial signal molecules that induce symbiosis and subsequent nodulation induction. Nod factors are LCO (lipo-chitin oligosaccharide), a modified beta-1,4-linked N-acetylglucosamine oligosaccharide. This subunit is responsible for energy coupling to the transport system. This chain is Nod factor export ATP-binding protein I, found in Rhizobium meliloti (Ensifer meliloti).